The chain runs to 631 residues: MKNETEAVADQPPKTGPVKPGHEVIADYVRTLDMSPGVYRMLDSQSRVLYVGKARALKRRVASYAKPSGHSPRIARMIRDTASMMFLTTRTETEALLLEQNLIKQLKPKFNVLLRDDKSFPNILVSDEHAFPQIKKHRGSKKEKGSYFGPFASAGAVNRTLNQLQKVFLLRNCTDAVFESRTRPCLLYQIKRCSGPCVGHISEEDYGASVKDAVRFLKGDSTDLQRQLADGMAAASEAMEFERAAALRDRIRALTNVQSAQGINPQGVKEADVIALHMEGGQACVQVFFIRANQNWGNRDFYPRVGADIEEPEVLEAFLGQFYDQKEPPKQLLLSHPVESMDLMVDALSGKRGTKVEILVPQRGEKAELVDGARRNARESLGRKMAETQAQGKLLDGLAGAFGLDGPPKRVEVYDNSHIQGAHAVGAMIVAGPEGYLKSQYRKFNIKGGSLTPGDDFGMMKEVLTRRFARLLKEDPDRETEAWPDLLLIDGGAGQISAVKEIMDDLGVDDVPFIGVAKGIDRDQGKEEFYRPGQPVFALKRNDPVLYFVQRMRDEAHRFAIGAHRAKRSKAVSATPLDDVPGVGAGRKRALLAHFGSAKAVARANLSDLTAVDGVSEGLAQKIYDFFHDQA.

The interval 1 to 20 (MKNETEAVADQPPKTGPVKP) is disordered. The 79-residue stretch at 34 to 112 (MSPGVYRMLD…IKQLKPKFNV (79 aa)) folds into the GIY-YIG domain. Positions 222-257 (TDLQRQLADGMAAASEAMEFERAAALRDRIRALTNV) constitute a UVR domain.

It belongs to the UvrC family. As to quaternary structure, interacts with UvrB in an incision complex.

The protein resides in the cytoplasm. The UvrABC repair system catalyzes the recognition and processing of DNA lesions. UvrC both incises the 5' and 3' sides of the lesion. The N-terminal half is responsible for the 3' incision and the C-terminal half is responsible for the 5' incision. The chain is UvrABC system protein C from Jannaschia sp. (strain CCS1).